The following is a 614-amino-acid chain: Membrane protein insertase YidC (614 aa).

Residues 6-26 (IVLLIIFSTSLLFLWDAWIKE) traverse the membrane as a helical segment. 2 stretches are compositionally biased toward polar residues: residues 34–48 (PAITQADSSAGSTQS) and 60–70 (ELTSSQASPDT). The interval 34-87 (PAITQADSSAGSTQSRNDDSLPVPGSELTSSQASPDTNGIPASGGNGDSVTPRL) is disordered. A run of 4 helical transmembrane segments spans residues 380-400 (WGVAIILLTMTVKLLFFPLSA), 450-470 (FPILVQIPVFIALYWTILAAV), 484-504 (LSSPDPFYMLPLLMGISMFVQ), and 524-544 (PVAFSAIFFFFPAGLVLYSLV). The segment at 562-614 (TAPSKDTPEPPVSKQVNSSENPETTANSPADSPKQPQTPANNPRKMYKRTRKK) is disordered. The segment covering 575-602 (KQVNSSENPETTANSPADSPKQPQTPAN) has biased composition (polar residues).

It belongs to the OXA1/ALB3/YidC family. Type 1 subfamily. As to quaternary structure, interacts with the Sec translocase complex via SecD. Specifically interacts with transmembrane segments of nascent integral membrane proteins during membrane integration.

Its subcellular location is the cell inner membrane. In terms of biological role, required for the insertion and/or proper folding and/or complex formation of integral membrane proteins into the membrane. Involved in integration of membrane proteins that insert both dependently and independently of the Sec translocase complex, as well as at least some lipoproteins. Aids folding of multispanning membrane proteins. This is Membrane protein insertase YidC from Nitrosomonas europaea (strain ATCC 19718 / CIP 103999 / KCTC 2705 / NBRC 14298).